The primary structure comprises 275 residues: Holocytochrome c-type synthase (275 aa).

Disordered regions lie at residues 1-59 (MGLS…KTNS) and 83-102 (KENLDPSNLMPPPNQTPAPD). The N-myristoyl glycine moiety is linked to residue Gly-2. The segment covering 9-28 (AASTVQTSTPAASDHQTAAP) has biased composition (polar residues). HRM repeat units follow at residues 31-36 (GCPMHE) and 41-46 (GCPVSA). Residues 48–59 (PSDSTCGSKTNS) are compositionally biased toward polar residues. Residues 91-102 (LMPPPNQTPAPD) show a composition bias toward pro residues.

This sequence belongs to the cytochrome c-type heme lyase family.

The protein resides in the mitochondrion inner membrane. It is found in the membrane. It carries out the reaction holo-[cytochrome c] = apo-[cytochrome c] + heme b. In terms of biological role, lyase that catalyzes the covalent linking of the heme group to the cytochrome C apoprotein to produce the mature functional cytochrome. The sequence is that of Holocytochrome c-type synthase from Bos taurus (Bovine).